The sequence spans 481 residues: Phosphoglycerate kinase, chloroplastic (481 aa).

The N-terminal 75 residues, 1 to 75 (MASATASHTL…SSKPIRGVAS (75 aa)), are a transit peptide targeting the chloroplast. Positions 98, 99, 101, 115, 137, 138, 140, 141, 196, 228, and 229 each coordinate (2R)-3-phosphoglycerate. An ADP-binding site is contributed by G274. G274 contributes to the CDP binding site. Residues K276 and K280 each contribute to the AMP site. Residue K280 coordinates ATP. G298 provides a ligand contact to ADP. Residue G298 participates in CDP binding. The AMP site is built by G299 and G371. ATP is bound by residues G299 and G371. CDP is bound by residues G396 and F401. F401 is an ADP binding site. E402 lines the AMP pocket. The ATP site is built by E402, D433, and S434. D433 is a binding site for Mg(2+).

This sequence belongs to the phosphoglycerate kinase family. In terms of assembly, monomer. Mg(2+) is required as a cofactor.

The protein resides in the plastid. The protein localises to the chloroplast. The catalysed reaction is (2R)-3-phosphoglycerate + ATP = (2R)-3-phospho-glyceroyl phosphate + ADP. Its pathway is carbohydrate biosynthesis; Calvin cycle. The sequence is that of Phosphoglycerate kinase, chloroplastic from Nicotiana tabacum (Common tobacco).